A 160-amino-acid chain; its full sequence is Transcription elongation factor GreA (160 aa).

A coiled-coil region spans residues 49–75 (SEYDEAKNDQAFTEGKILQLENKLKNA).

The protein belongs to the GreA/GreB family.

Functionally, necessary for efficient RNA polymerase transcription elongation past template-encoded arresting sites. The arresting sites in DNA have the property of trapping a certain fraction of elongating RNA polymerases that pass through, resulting in locked ternary complexes. Cleavage of the nascent transcript by cleavage factors such as GreA or GreB allows the resumption of elongation from the new 3'terminus. GreA releases sequences of 2 to 3 nucleotides. This is Transcription elongation factor GreA from Clostridium botulinum (strain Eklund 17B / Type B).